The chain runs to 140 residues: Hemoglobin subunit beta (140 aa).

Positions 1–140 (GSDLVSGFWG…VGDALAKAYH (140 aa)) constitute a Globin domain. Heme b contacts are provided by His-57 and His-86.

This sequence belongs to the globin family. As to quaternary structure, heterotetramer of two alpha chains and two beta chains. Red blood cells.

Functionally, involved in oxygen transport from the lung to the various peripheral tissues. This chain is Hemoglobin subunit beta (HBB), found in Pelophylax lessonae (Pool frog).